Reading from the N-terminus, the 89-residue chain is Abortive infection protein (89 aa).

The protein resides in the cell membrane. Functionally, ABI may interact with a target in the cell membrane, which could be the product of the host's cmrA gene, and cause disruption of the cellular membrane such that lysis of the infected cell and death of the infecting phage would result. In Escherichia coli, this protein is Abortive infection protein (abi).